Consider the following 341-residue polypeptide: Two-component response regulator ORR30 (341 aa).

Residues 12–127 (RVLVIDDDCS…ELSNIWQHIF (116 aa)) form the Response regulatory domain. D63 is modified (4-aspartylphosphate). An HTH myb-type domain is found at 195-254 (DLGKSRLTWTTQLHRQFIAAVNHLGEDKAVPKKILGIMKVKHLTREQVASHLQKYRMQLK). The H-T-H motif DNA-binding region spans 225–250 (PKKILGIMKVKHLTREQVASHLQKYR).

Belongs to the ARR family. Type-B subfamily. Two-component system major event consists of a His-to-Asp phosphorelay between a sensor histidine kinase (HK) and a response regulator (RR). In plants, the His-to-Asp phosphorelay involves an additional intermediate named Histidine-containing phosphotransfer protein (HPt). This multistep phosphorelay consists of a His-Asp-His-Asp sequential transfer of a phosphate group between first a His and an Asp of the HK protein, followed by the transfer to a conserved His of the HPt protein and finally the transfer to an Asp in the receiver domain of the RR protein.

The protein localises to the nucleus. Its function is as follows. Transcriptional activator that acts as a floral inducer to promote short-day (SD) flowering pathway. Activates HD3A and other FT-like genes independently from HD1. May also activate MADS-box transcription factors involved in flowering regulation. Functions as a response regulator involved in His-to-Asp phosphorelay signal transduction system. Phosphorylation of the Asp residue in the receiver domain activates the ability of the protein to promote the transcription of target genes. May directly activate some type-A response regulators in response to cytokinins. In Oryza sativa subsp. japonica (Rice), this protein is Two-component response regulator ORR30.